Reading from the N-terminus, the 228-residue chain is Probable septum site-determining protein MinC (228 aa).

The protein belongs to the MinC family. As to quaternary structure, interacts with MinD and FtsZ.

Functionally, cell division inhibitor that blocks the formation of polar Z ring septums. Rapidly oscillates between the poles of the cell to destabilize FtsZ filaments that have formed before they mature into polar Z rings. Prevents FtsZ polymerization. The polypeptide is Probable septum site-determining protein MinC (Pectobacterium carotovorum subsp. carotovorum (strain PC1)).